A 179-amino-acid chain; its full sequence is Inner membrane-spanning protein YciB (179 aa).

5 helical membrane-spanning segments follow: residues 22–42 (IYVASGALIVATALALVFTWF), 50–70 (MTLITFLMVLVFGTLTLVFHN), 76–96 (WKVTIIYTLFALALLISQLVL), 121–141 (LAWAVFFLVCGLANIYVAFWL), and 149–169 (FKVFGLTALTLVFTLLSGVYI).

This sequence belongs to the YciB family.

It localises to the cell inner membrane. Plays a role in cell envelope biogenesis, maintenance of cell envelope integrity and membrane homeostasis. This Serratia proteamaculans (strain 568) protein is Inner membrane-spanning protein YciB.